Reading from the N-terminus, the 81-residue chain is Large ribosomal subunit protein bL31 (81 aa).

Belongs to the bacterial ribosomal protein bL31 family. Type A subfamily. In terms of assembly, part of the 50S ribosomal subunit.

Binds the 23S rRNA. This Synechocystis sp. (strain ATCC 27184 / PCC 6803 / Kazusa) protein is Large ribosomal subunit protein bL31.